A 162-amino-acid polypeptide reads, in one-letter code: Ribonuclease P protein component (162 aa).

A disordered region spans residues 1 to 62 (MDEKDLATQP…GPPKAGGRLL (62 aa)). Positions 21–36 (GPHEDPRRQERAEAQA) are enriched in basic and acidic residues.

This sequence belongs to the RnpA family. Consists of a catalytic RNA component (M1 or rnpB) and a protein subunit.

The enzyme catalyses Endonucleolytic cleavage of RNA, removing 5'-extranucleotides from tRNA precursor.. RNaseP catalyzes the removal of the 5'-leader sequence from pre-tRNA to produce the mature 5'-terminus. It can also cleave other RNA substrates such as 4.5S RNA. The protein component plays an auxiliary but essential role in vivo by binding to the 5'-leader sequence and broadening the substrate specificity of the ribozyme. This is Ribonuclease P protein component from Thermus aquaticus.